The chain runs to 546 residues: CTP synthase (546 aa).

The segment at 1 to 266 (MTTRYIFVTG…DDLVVKRFGL (266 aa)) is amidoligase domain. Ser-14 contacts CTP. Ser-14 contacts UTP. ATP is bound by residues 15–20 (SLGKGI) and Asp-72. Mg(2+)-binding residues include Asp-72 and Glu-140. CTP-binding positions include 147 to 149 (DIE), 187 to 192 (KTKPTQ), and Lys-223. UTP is bound by residues 187–192 (KTKPTQ) and Lys-223. 239–241 (KDV) is an ATP binding site. The Glutamine amidotransferase type-1 domain maps to 291–542 (VIGMVGKYIE…VAAASAHQKR (252 aa)). Residue Gly-352 coordinates L-glutamine. Catalysis depends on Cys-379, which acts as the Nucleophile; for glutamine hydrolysis. Residues 380 to 383 (LGMQ), Glu-403, and Arg-470 contribute to the L-glutamine site. Residues His-515 and Glu-517 contribute to the active site.

The protein belongs to the CTP synthase family. Homotetramer.

The enzyme catalyses UTP + L-glutamine + ATP + H2O = CTP + L-glutamate + ADP + phosphate + 2 H(+). The catalysed reaction is L-glutamine + H2O = L-glutamate + NH4(+). It carries out the reaction UTP + NH4(+) + ATP = CTP + ADP + phosphate + 2 H(+). The protein operates within pyrimidine metabolism; CTP biosynthesis via de novo pathway; CTP from UDP: step 2/2. Its activity is regulated as follows. Allosterically activated by GTP, when glutamine is the substrate; GTP has no effect on the reaction when ammonia is the substrate. The allosteric effector GTP functions by stabilizing the protein conformation that binds the tetrahedral intermediate(s) formed during glutamine hydrolysis. Inhibited by the product CTP, via allosteric rather than competitive inhibition. Functionally, catalyzes the ATP-dependent amination of UTP to CTP with either L-glutamine or ammonia as the source of nitrogen. Regulates intracellular CTP levels through interactions with the four ribonucleotide triphosphates. In Shewanella sp. (strain ANA-3), this protein is CTP synthase.